A 433-amino-acid chain; its full sequence is Serendipity locus protein delta (433 aa).

A ZAD domain is found at 1 to 90 (MDTCFFCGAV…TQKRLTTQLK (90 aa)). Residues Cys-4, Cys-7, Cys-61, and Cys-64 each coordinate Zn(2+). Residues 141 to 162 (DTEIKREFVDEEEEEDDDDDDE) form a disordered region. Positions 149-162 (VDEEEEEDDDDDDE) are enriched in acidic residues. A Nuclear localization signal motif is present at residues 187–193 (PTKKRVK). 7 C2H2-type zinc fingers span residues 194-217 (QECTTCGKVYNSWYQLQKHISEEH), 223-245 (HICPICGVIRRDEEYLELHMNLH), 251-273 (KQCRYCPKSFSRPVNTLRHMRMH), 279-301 (YQCEKCGLRFSQDNLLYNHRLRH), 308-330 (IICSICNVSFKSRKTFNHHTLIH), 337-359 (HYCSVCPKSFTERYTLKMHMKTH), and 405-428 (GFCLICNTNFENKKELEHHLQFDH).

As to quaternary structure, homodimer (via ZAD domain) in solution. Binds DNA as a homodimer. N-terminal regions of the protein are required, in addition to the zinc fingers, for the specificity of chromatin-binding. Predominantly localized to the sub- and supraesophagal ganglia and the ventral nerve cord in the embryo, after dorsal closure.

It localises to the nucleus. In terms of biological role, transcriptional activator that controls bicoid gene expression during oogenesis. Found in transcriptionally active cells. Binds to specific sites on polytene chromosomes of third instar larvae. Binds to the consensus DNA sequence 5'-YTAGAGATGGRAA-3'. The polypeptide is Serendipity locus protein delta (Sry-delta) (Drosophila melanogaster (Fruit fly)).